The chain runs to 407 residues: Arginine deiminase (407 aa).

The active-site Amidino-cysteine intermediate is the cysteine 397.

The protein belongs to the arginine deiminase family.

It is found in the cytoplasm. It carries out the reaction L-arginine + H2O = L-citrulline + NH4(+). The protein operates within amino-acid degradation; L-arginine degradation via ADI pathway; carbamoyl phosphate from L-arginine: step 1/2. This chain is Arginine deiminase, found in Escherichia coli O81 (strain ED1a).